A 384-amino-acid polypeptide reads, in one-letter code: Ribosomal RNA large subunit methyltransferase G (384 aa).

It belongs to the methyltransferase superfamily. RlmG family.

Its subcellular location is the cytoplasm. It carries out the reaction guanosine(1835) in 23S rRNA + S-adenosyl-L-methionine = N(2)-methylguanosine(1835) in 23S rRNA + S-adenosyl-L-homocysteine + H(+). Functionally, specifically methylates the guanine in position 1835 (m2G1835) of 23S rRNA. The protein is Ribosomal RNA large subunit methyltransferase G of Pseudoalteromonas atlantica (strain T6c / ATCC BAA-1087).